Reading from the N-terminus, the 465-residue chain is 23S rRNA (uracil(1939)-C(5))-methyltransferase RlmD (465 aa).

Residues 1-22 (MSEAVPTSARKSKNAPVAPGPA) form a disordered region. The TRAM domain occupies 16 to 80 (PVAPGPAPVL…PSYEQATVVD (65 aa)). 4 residues coordinate [4Fe-4S] cluster: Cys93, Cys99, Cys102, and Cys181. Residues Gln289, Phe318, Asn323, Glu339, Asn367, and Asp388 each contribute to the S-adenosyl-L-methionine site. Catalysis depends on Cys421, which acts as the Nucleophile.

It belongs to the class I-like SAM-binding methyltransferase superfamily. RNA M5U methyltransferase family. RlmD subfamily.

The catalysed reaction is uridine(1939) in 23S rRNA + S-adenosyl-L-methionine = 5-methyluridine(1939) in 23S rRNA + S-adenosyl-L-homocysteine + H(+). Its function is as follows. Catalyzes the formation of 5-methyl-uridine at position 1939 (m5U1939) in 23S rRNA. This chain is 23S rRNA (uracil(1939)-C(5))-methyltransferase RlmD, found in Burkholderia ambifaria (strain ATCC BAA-244 / DSM 16087 / CCUG 44356 / LMG 19182 / AMMD) (Burkholderia cepacia (strain AMMD)).